Here is a 734-residue protein sequence, read N- to C-terminus: 1,4-alpha-glucan branching enzyme GlgB (734 aa).

The active-site Nucleophile is the Asp417. The active-site Proton donor is Glu470.

Belongs to the glycosyl hydrolase 13 family. GlgB subfamily. In terms of assembly, monomer.

It catalyses the reaction Transfers a segment of a (1-&gt;4)-alpha-D-glucan chain to a primary hydroxy group in a similar glucan chain.. Its pathway is glycan biosynthesis; glycogen biosynthesis. Catalyzes the formation of the alpha-1,6-glucosidic linkages in glycogen by scission of a 1,4-alpha-linked oligosaccharide from growing alpha-1,4-glucan chains and the subsequent attachment of the oligosaccharide to the alpha-1,6 position. This chain is 1,4-alpha-glucan branching enzyme GlgB (glgB), found in Rhizobium radiobacter (Agrobacterium tumefaciens).